A 365-amino-acid polypeptide reads, in one-letter code: Heat-inducible transcription repressor HrcA (365 aa).

Belongs to the HrcA family.

Its function is as follows. Negative regulator of class I heat shock genes (grpE-dnaK-dnaJ and groELS operons). Prevents heat-shock induction of these operons. This Trichormus variabilis (strain ATCC 29413 / PCC 7937) (Anabaena variabilis) protein is Heat-inducible transcription repressor HrcA.